The sequence spans 156 residues: Putative pre-16S rRNA nuclease (156 aa).

This sequence belongs to the YqgF nuclease family.

It localises to the cytoplasm. Could be a nuclease involved in processing of the 5'-end of pre-16S rRNA. The sequence is that of Putative pre-16S rRNA nuclease from Ehrlichia ruminantium (strain Gardel).